The sequence spans 1997 residues: Nucleoprotein TPR (1997 aa).

Coiled coils occupy residues 1–36, 101–277, 335–1103, and 1129–1305; these read QEQH…NDLL, EIVK…HQMT, DSTE…IKTI, and AEAS…EPQE. Basic and acidic residues-rich tracts occupy residues 672–702 and 1290–1305; these read SSEY…KTVE and REQQ…EPQE. 6 disordered regions span residues 672–706, 1290–1352, 1438–1529, 1561–1752, 1795–1832, and 1870–1997; these read SSEY…QMEQ, REQQ…AAVP, AFVQ…KTET, IQTS…RRQS, AIHS…ASQG, and ENPA…RSNI. 3 stretches are compositionally biased toward polar residues: residues 1306–1321, 1328–1347, and 1446–1487; these read TTRI…QPTT, SANT…SKVT, and SHAT…SSSI. Positions 1511 to 1529 are enriched in basic and acidic residues; sequence DQQRTKKRKEEDIEEKTET. Residues 1561 to 1587 show a composition bias toward polar residues; that stretch reads IQTSQVIESQAPEQLQNVQSTQDSLQD. 2 stretches are compositionally biased toward acidic residues: residues 1601 to 1637 and 1644 to 1667; these read SDEE…DSNE and GNED…ETED. Polar residues-rich tracts occupy residues 1692–1709, 1817–1830, and 1879–1899; these read AEST…SASD, QASS…QLAS, and HASQ…TSVD. The span at 1902–1915 shows a compositional bias: acidic residues; that stretch reads AADEGDEVFVEAES. A compositionally biased stretch (low complexity) spans 1950 to 1959; sequence SSSIADTSSS.

This sequence belongs to the TPR family. Homodimer. Part of the nuclear pore complex (NPC). Interacts with nuclear receptor KPNB1; the interaction occurs in a RanGTP-dependent manner. Associates with the Importin alpha/Importin beta receptor. Expressed in epithelial cells, oocytes and egg (at protein level).

The protein resides in the nucleus. Its subcellular location is the nucleus membrane. It is found in the nucleus envelope. The protein localises to the nuclear pore complex. It localises to the cytoplasm. The protein resides in the cytoskeleton. Its subcellular location is the spindle. It is found in the chromosome. The protein localises to the centromere. It localises to the kinetochore. Component of the nuclear pore complex (NPC), a complex required for the trafficking across the nuclear envelope. Functions as a scaffolding element in the nuclear phase of the NPC essential for normal nucleocytoplasmic transport of proteins and mRNAs, plays a role in the establishment of nuclear-peripheral chromatin compartmentalization in interphase, and in the mitotic spindle checkpoint signaling during mitosis. Involved in the quality control and retention of unspliced mRNAs in the nucleus. Implicated in nuclear export of mRNAs transcribed from heat shock gene promoters. May play a limited role in the regulation of nuclear protein export. May be involved in the formation and/or maintenance of NPC-associated perinuclear heterochromatin exclusion zones (HEZs). Finally, may act as a spatial regulator of the spindle-assembly checkpoint (SAC) response. The polypeptide is Nucleoprotein TPR (Xenopus laevis (African clawed frog)).